Consider the following 1108-residue polypeptide: TBC1 domain family member 8B (1108 aa).

2 consecutive GRAM domains span residues 143-210 (LRFE…ERTS) and 283-351 (QSFR…ELPD). In terms of domain architecture, Rab-GAP TBC spans 469–656 (GVPETLRGEL…NVVDCFFYDG (188 aa)). In terms of domain architecture, EF-hand spans 822–857 (HSRSLARSAFHLLDENGDGLVNFKEFICGLDILYNR). Residues Asp-835, Asn-837, Asp-839, and Glu-846 each contribute to the Ca(2+) site. A disordered region spans residues 961 to 1059 (GRKLQDSSPQ…PTDTPSSPCT (99 aa)). Residues 967–998 (SSPQKTPQTTPTSTSQPESSPTKPTSPESETP) show a composition bias toward low complexity. The segment covering 1010–1024 (SPVSQHETAPSHSDI) has biased composition (polar residues). The segment covering 1025–1057 (TPNSTSHPSTPTSSPTETSSPVLDTPTDTPSSP) has biased composition (low complexity).

The protein localises to the cytoplasm. It localises to the cytosol. Functionally, involved in vesicular recycling, probably as a GTPase-activating protein for Rab family protein(s). The chain is TBC1 domain family member 8B (tbc1d8b) from Danio rerio (Zebrafish).